A 256-amino-acid chain; its full sequence is 5-oxoprolinase subunit A 1 (256 aa).

Belongs to the LamB/PxpA family. As to quaternary structure, forms a complex composed of PxpA, PxpB and PxpC.

It catalyses the reaction 5-oxo-L-proline + ATP + 2 H2O = L-glutamate + ADP + phosphate + H(+). Its function is as follows. Catalyzes the cleavage of 5-oxoproline to form L-glutamate coupled to the hydrolysis of ATP to ADP and inorganic phosphate. The polypeptide is 5-oxoprolinase subunit A 1 (Pseudomonas syringae pv. tomato (strain ATCC BAA-871 / DC3000)).